Consider the following 455-residue polypeptide: MIAREGSNSRKVFIKTYGCQMNVYDSVRMSDALAKDGYVQTEDMGEADLVLLNTCHIREKAAEKVYSALGRLRDMKKSREEQGREFMIGVAGCVAQAEGEEILRRAPAVDVVIGPQTYHRLPDALKRVRRGERVIETEYAVEDKFEHLPVAEKATLRSRGVTAFLTVQEGCDKFCTFCVVPYTRGSEVSRPVRQIVDEAMKLVDAGVREITLLGQNVNAWQGEGPKGEKWGLAELLYRLAEIPGLARLRYTTSHPRDMDDRLIGAHRDLRILMPYLHLPVQSGSDRILKAMNRRHTGEEYIQLIEKIRSARPDIAMSGDFIVGFPGETDRDFEDTMAMVETVKYAQAFSFKYSTRPGTPGADLTDQVAEDVKAERLERLQALLLRQQKEFAESLVGKTMDVLLEKPGRMPEQLIGRSPWLQSVNLDAKTLKIGDIVNVRITATGPNSLFAEVAGS.

The MTTase N-terminal domain maps to 10 to 130 (RKVFIKTYGC…LPDALKRVRR (121 aa)). 6 residues coordinate [4Fe-4S] cluster: C19, C55, C93, C171, C175, and C178. In terms of domain architecture, Radical SAM core spans 157 to 389 (RSRGVTAFLT…QALLLRQQKE (233 aa)). The TRAM domain maps to 392-454 (ESLVGKTMDV…PNSLFAEVAG (63 aa)).

This sequence belongs to the methylthiotransferase family. MiaB subfamily. Monomer. [4Fe-4S] cluster is required as a cofactor.

The protein localises to the cytoplasm. It catalyses the reaction N(6)-dimethylallyladenosine(37) in tRNA + (sulfur carrier)-SH + AH2 + 2 S-adenosyl-L-methionine = 2-methylsulfanyl-N(6)-dimethylallyladenosine(37) in tRNA + (sulfur carrier)-H + 5'-deoxyadenosine + L-methionine + A + S-adenosyl-L-homocysteine + 2 H(+). Its function is as follows. Catalyzes the methylthiolation of N6-(dimethylallyl)adenosine (i(6)A), leading to the formation of 2-methylthio-N6-(dimethylallyl)adenosine (ms(2)i(6)A) at position 37 in tRNAs that read codons beginning with uridine. This chain is tRNA-2-methylthio-N(6)-dimethylallyladenosine synthase, found in Agrobacterium fabrum (strain C58 / ATCC 33970) (Agrobacterium tumefaciens (strain C58)).